The primary structure comprises 1069 residues: Kinesin-like protein vab-8 (1069 aa).

A Kinesin motor domain is found at 15 to 325 (PLRTIPKLRL…ACKIARTRVK (311 aa)). Disordered stretches follow at residues 328–374 (MGHG…LESG), 391–436 (SRTT…KSSP), and 572–598 (EQEE…RILS). 2 interaction with unc-51 regions span residues 331–517 (GRKP…KSKY) and 517–719 (YNLD…TVVD). Composition is skewed to low complexity over residues 339-364 (SSGT…GTPR) and 391-407 (SRTT…TPTS). Positions 403–877 (STPTSIRPLH…SAERDRKTSK (475 aa)) are interaction with unc-73. Positions 719 to 769 (DWSQIERKKEREKDAMEEEKRKEVLRERRAKLKITELEIKRERNMIDKELD) form a coiled coil. The interval 786–960 (SLSPCRGGRT…RQSYSASSGY (175 aa)) is disordered. A compositionally biased stretch (low complexity) spans 824–847 (GGSLAKLSASGASGSGPPSSPSLG). Positions 883–897 (SSKERRSSGSKEELQ) are enriched in basic and acidic residues. Positions 906-928 (TSPKTYGGPGTSSSGRGSSAPGS) are enriched in low complexity. Residues 938 to 960 (TEKTANGTMPRSKRQSYSASSGY) show a composition bias toward polar residues. The stretch at 990-1027 (LVRQADEIRHRQWQLKKELEEAKRAIGQEEDAKMIANS) forms a coiled coil.

The protein belongs to the TRAFAC class myosin-kinesin ATPase superfamily. Kinesin family. KIF26 subfamily. As to quaternary structure, interacts with unc-51 and unc-73. In terms of processing, phosphorylated by unc-51.

The protein resides in the cytoplasm. It is found in the cytoskeleton. Its function is as follows. Required for posterior migration of cells and axon growth cones during nervous system assembly. In PLM neuron, regulates innexin unc-9 gap junction turnover by suppressing unc-9 transport out of the gap junctions. The sequence is that of Kinesin-like protein vab-8 (vab-8) from Caenorhabditis briggsae.